Here is a 216-residue protein sequence, read N- to C-terminus: Probable csgAB operon transcriptional regulatory protein (216 aa).

The HTH luxR-type domain occupies 149–214 (NSTESALLTH…QAVSWANDNL (66 aa)). A DNA-binding region (H-T-H motif) is located at residues 173–192 (NNEIARSLFISENTVKTHLY).

In terms of biological role, the master regulator for adhesive curli fimbriae expression; necessary for transcription of the csgAB operon. Plays a positive role in biofilm formation. This is Probable csgAB operon transcriptional regulatory protein from Salmonella typhimurium (strain LT2 / SGSC1412 / ATCC 700720).